The following is a 331-amino-acid chain: DNA-directed RNA polymerase subunit alpha (331 aa).

Residues Met1–Asn226 form an alpha N-terminal domain (alpha-NTD) region. Positions Leu243–Asn331 are alpha C-terminal domain (alpha-CTD).

This sequence belongs to the RNA polymerase alpha chain family. As to quaternary structure, homodimer. The RNAP catalytic core consists of 2 alpha, 1 beta, 1 beta' and 1 omega subunit. When a sigma factor is associated with the core the holoenzyme is formed, which can initiate transcription.

It carries out the reaction RNA(n) + a ribonucleoside 5'-triphosphate = RNA(n+1) + diphosphate. DNA-dependent RNA polymerase catalyzes the transcription of DNA into RNA using the four ribonucleoside triphosphates as substrates. This chain is DNA-directed RNA polymerase subunit alpha, found in Clavibacter michiganensis subsp. michiganensis (strain NCPPB 382).